The chain runs to 57 residues: Probable mRNA interferase HicA 1 (57 aa).

It belongs to the HicA mRNA interferase family. In terms of assembly, probably forms a complex with the cognate antitoxin HicB 1 which inhibits the mRNA interferase activity.

In terms of biological role, toxic component of a type II toxin-antitoxin (TA) system. A probable translation-independent mRNA interferase. This Photorhabdus laumondii subsp. laumondii (strain DSM 15139 / CIP 105565 / TT01) (Photorhabdus luminescens subsp. laumondii) protein is Probable mRNA interferase HicA 1 (hicA1).